Consider the following 182-residue polypeptide: MPKQLYFSKFPVGSQVFYRTKLSAAFVNLKPILPGHVLVIPQRAVPRLKDLTPSELTDLFTSVRKVQQVIEKVFSASASNIGIQDGVDAGQTVPHVHVHIIPRKKADFSENDLVYSELEKNEGNLASLYLTGNERYAGDERPPTSMRQAIPKDEDRKPRTLEEMEKEAQWLKGYFSEEQEKE.

The HIT domain occupies 3–110 (KQLYFSKFPV…IPRKKADFSE (108 aa)). Residues asparagine 28, glutamine 84, and 90–93 (GQTV) each bind substrate. The Histidine triad motif signature appears at 95–99 (HVHVH). The active-site Tele-AMP-histidine intermediate is the histidine 97. Residue histidine 99 participates in substrate binding. The tract at residues 135 to 161 (RYAGDERPPTSMRQAIPKDEDRKPRTL) is disordered. The segment covering 150–161 (IPKDEDRKPRTL) has biased composition (basic and acidic residues).

The catalysed reaction is P(1),P(4)-bis(5'-guanosyl) tetraphosphate + H2O = GMP + GTP + 2 H(+). Asymmetrically hydrolyzes Ap4A to yield AMP and ATP. In Schizosaccharomyces pombe (strain 972 / ATCC 24843) (Fission yeast), this protein is Bis(5'-nucleosyl)-tetraphosphatase [asymmetrical] (aph1).